The sequence spans 394 residues: NAD(P)H-quinone oxidoreductase subunit H (394 aa).

The protein belongs to the complex I 49 kDa subunit family. As to quaternary structure, NDH-1 can be composed of about 15 different subunits; different subcomplexes with different compositions have been identified which probably have different functions.

The protein localises to the cellular thylakoid membrane. It catalyses the reaction a plastoquinone + NADH + (n+1) H(+)(in) = a plastoquinol + NAD(+) + n H(+)(out). The catalysed reaction is a plastoquinone + NADPH + (n+1) H(+)(in) = a plastoquinol + NADP(+) + n H(+)(out). In terms of biological role, NDH-1 shuttles electrons from an unknown electron donor, via FMN and iron-sulfur (Fe-S) centers, to quinones in the respiratory and/or the photosynthetic chain. The immediate electron acceptor for the enzyme in this species is believed to be plastoquinone. Couples the redox reaction to proton translocation, and thus conserves the redox energy in a proton gradient. Cyanobacterial NDH-1 also plays a role in inorganic carbon-concentration. This is NAD(P)H-quinone oxidoreductase subunit H from Prochlorococcus marinus (strain MIT 9313).